We begin with the raw amino-acid sequence, 421 residues long: MGARVLVATTPGDGHVNPMVPVAQEMVSRGHEVRWYTGKAFRSTVERTGARHEPMRDAHDFGGMPREEAFPQHAGLTGITGMIAGFRDIFIEPAADQMTDLLALLEDFPADVLVTDETFFGAGFVSERTGIPVAWIATSIYVFSSRDTAPLGLGLPPSSSRLGRLRNTVLKQLTDRVVMRDLRRHADVVRDRVGLPRIRKGAFENIMRTPDLYLLGTVPSFEYPRGDMPPEVRFVGPFVSPAPPDFTPPAWWGELDSGRPVVHVTQGTVANDAERLLLPAIRALAAEDVLVVATTGAPLELEPMPANVRVERFIPHHALLPHVDAMVTNGGYGGVNTALAHGVPLVVAAATEEKHEVAARVSWSGAGVHLKKRRLSERDIRRAVRAVLDEPRFRVHAARLRDEYAARDAVVDAVDLIEGLV.

This sequence belongs to the glycosyltransferase 28 family.

It carries out the reaction 4'-demethylrebeccamycin + H2O = dichloroarcyriaflavin A + beta-D-glucose. The protein operates within alkaloid biosynthesis. Catalyzes the penultimate step in the biosynthesis of rebeccamycin, an indolocarbazole alkaloid that inhibits topoisomerase 1. Has a wide substrate range, including staurosporine aglycone, EJG-III-108A, J-104303, 6-N-methyl-arcyriaflavin and indolo-[2,3-a]-carbazole. The protein is 4'-demethylrebeccamycin synthase (rebG) of Lentzea aerocolonigenes (Lechevalieria aerocolonigenes).